The primary structure comprises 1094 residues: AP-3 complex subunit beta-1 (1094 aa).

Residues 1–11 are compositionally biased toward polar residues; sequence MSSNSFPYNEQ. 2 disordered regions span residues 1-31 and 268-292; these read MSSN…ISPS and DNGK…KPYT. Phosphoserine is present on residues Ser-276 and Ser-609. Residues 662–811 form a disordered region; sequence PAGKAKQENS…EKKTKQDRTP (150 aa). Positions 666-677 are enriched in basic and acidic residues; the sequence is AKQENSAKKFYS. 2 stretches are compositionally biased toward acidic residues: residues 678-696 and 705-726; these read ESEE…ESES and ESGE…EQDS. Basic and acidic residues-rich tracts occupy residues 727-738 and 748-764; these read ESGRESGLENKR and GKSD…KSKT. Residues Ser-750 and Ser-752 each carry the phosphoserine modification. Low complexity predominate over residues 765–777; it reads SDSSNDESSSIED. The span at 778-791 shows a compositional bias: acidic residues; the sequence is SSSDSESESEPESE. Residues 792-811 are compositionally biased toward basic and acidic residues; that stretch reads SESRRVTKEKEKKTKQDRTP.

The protein belongs to the adaptor complexes large subunit family. In terms of assembly, adaptor protein complex 3 (AP-3) is a heterotetramer composed of two large adaptins (delta-type subunit AP3D1 and beta-type subunit AP3B1 or AP3B2), a medium adaptin (mu-type subunit AP3M1 or AP3M2) and a small adaptin (sigma-type subunit APS1 or AP3S2). AP-3 associates with the BLOC-1 complex. Interacts with KIF3A; interaction is direct; interaction is impaired by pyrophosphorylation of AP3B1. In terms of processing, phosphorylated on serine residues. Post-translationally, pyrophosphorylation by 5-diphosphoinositol pentakisphosphate (5-IP7) impairs interaction with KIF3A. Serine pyrophosphorylation is achieved by Mg(2+)-dependent, but enzyme independent transfer of a beta-phosphate from a inositol pyrophosphate to a pre-phosphorylated serine residue. Ubiquitously expressed.

It localises to the cytoplasmic vesicle. It is found in the clathrin-coated vesicle membrane. The protein resides in the golgi apparatus. In terms of biological role, subunit of non-clathrin- and clathrin-associated adaptor protein complex 3 (AP-3) that plays a role in protein sorting in the late-Golgi/trans-Golgi network (TGN) and/or endosomes. The AP complexes mediate both the recruitment of clathrin to membranes and the recognition of sorting signals within the cytosolic tails of transmembrane cargo molecules. AP-3 appears to be involved in the sorting of a subset of transmembrane proteins targeted to lysosomes and lysosome-related organelles. In concert with the BLOC-1 complex, AP-3 is required to target cargos into vesicles assembled at cell bodies for delivery into neurites and nerve terminals. This chain is AP-3 complex subunit beta-1 (AP3B1), found in Homo sapiens (Human).